We begin with the raw amino-acid sequence, 104 residues long: Pyrimidine/purine nucleoside phosphorylase (104 aa).

The protein belongs to the nucleoside phosphorylase PpnP family.

The enzyme catalyses a purine D-ribonucleoside + phosphate = a purine nucleobase + alpha-D-ribose 1-phosphate. The catalysed reaction is adenosine + phosphate = alpha-D-ribose 1-phosphate + adenine. It catalyses the reaction cytidine + phosphate = cytosine + alpha-D-ribose 1-phosphate. It carries out the reaction guanosine + phosphate = alpha-D-ribose 1-phosphate + guanine. The enzyme catalyses inosine + phosphate = alpha-D-ribose 1-phosphate + hypoxanthine. The catalysed reaction is thymidine + phosphate = 2-deoxy-alpha-D-ribose 1-phosphate + thymine. It catalyses the reaction uridine + phosphate = alpha-D-ribose 1-phosphate + uracil. It carries out the reaction xanthosine + phosphate = alpha-D-ribose 1-phosphate + xanthine. In terms of biological role, catalyzes the phosphorolysis of diverse nucleosides, yielding D-ribose 1-phosphate and the respective free bases. Can use uridine, adenosine, guanosine, cytidine, thymidine, inosine and xanthosine as substrates. Also catalyzes the reverse reactions. This Herminiimonas arsenicoxydans protein is Pyrimidine/purine nucleoside phosphorylase.